The sequence spans 38 residues: Large ribosomal subunit protein bL36 (38 aa).

The protein belongs to the bacterial ribosomal protein bL36 family.

This is Large ribosomal subunit protein bL36 from Pseudothermotoga lettingae (strain ATCC BAA-301 / DSM 14385 / NBRC 107922 / TMO) (Thermotoga lettingae).